The following is a 229-amino-acid chain: Nectarin-1 (229 aa).

An N-terminal signal peptide occupies residues 1–32 (MAAFGINSKIFQSMEMAILFLLAISIDRYCFA). The cysteines at positions 42 and 57 are disulfide-linked. Asparagine 60 carries an N-linked (GlcNAc...) asparagine glycan. The region spanning 69 to 217 (LAISKPGATN…TFQINTEDVQ (149 aa)) is the Cupin type-1 domain. Positions 117, 119, 124, and 163 each coordinate Mn(2+).

In terms of assembly, monomer. In the absence of manganese, it forms tetrameric and pentameric forms which show superoxide dismutase activity. Mn(2+) is required as a cofactor. As to expression, nectary tissues and to a lower level ovary. Not detected in petals, stems, leaves, roots or other floral tissues.

Its subcellular location is the secreted. The protein localises to the extracellular space. The protein resides in the apoplast. The catalysed reaction is 2 superoxide + 2 H(+) = H2O2 + O2. In terms of biological role, may interact with bacterial adhesins thereby protecting the reproductive tissues from microbial attack. Has no oxalate oxidase activity. The chain is Nectarin-1 (NECI) from Nicotiana langsdorffii x Nicotiana sanderae (Ornamental tobacco).